Consider the following 241-residue polypeptide: MRVLIEENYREMSKKAALLVASQVILKPDSVLGLATGSTPIGMYQELAEMYKEGEIDFSEVTTFNLDEYYNLPPEAPQSYHYYMKENFFKHVNIHPARTHIPDGMAGDVEAECQDYEEKIRRSGGIDLQILGIGPNGHIGFNEPDERLNVTTHLVDLTEETIQANSRFFDSPDDVPRKAISVGMATILKARRIILLASGRNKARAIKETVSGYVSTKVPASLLQTHPEVTLIIDKEAASLL.

Asp67 serves as the catalytic Proton acceptor; for enolization step. The active-site For ring-opening step is the Asn136. Residue His138 is the Proton acceptor; for ring-opening step of the active site. Glu143 acts as the For ring-opening step in catalysis.

This sequence belongs to the glucosamine/galactosamine-6-phosphate isomerase family. NagB subfamily.

The catalysed reaction is alpha-D-glucosamine 6-phosphate + H2O = beta-D-fructose 6-phosphate + NH4(+). The protein operates within amino-sugar metabolism; N-acetylneuraminate degradation; D-fructose 6-phosphate from N-acetylneuraminate: step 5/5. Functionally, catalyzes the reversible isomerization-deamination of glucosamine 6-phosphate (GlcN6P) to form fructose 6-phosphate (Fru6P) and ammonium ion. The sequence is that of Glucosamine-6-phosphate deaminase from Halothermothrix orenii (strain H 168 / OCM 544 / DSM 9562).